Consider the following 122-residue polypeptide: Small ribosomal subunit protein bS16 (122 aa).

Positions 87–122 (AQSNPKKALPKKKAQERAAASAAAAEKAAAAAAPEA) are disordered. Residues 103–122 (RAAASAAAAEKAAAAAAPEA) are compositionally biased toward low complexity.

The protein belongs to the bacterial ribosomal protein bS16 family.

The chain is Small ribosomal subunit protein bS16 from Methylocella silvestris (strain DSM 15510 / CIP 108128 / LMG 27833 / NCIMB 13906 / BL2).